The sequence spans 208 residues: MARYTGPTCKLARREGADLFLKSGIRSLDSKCKVTQLPGMHGASARRQKGTEYGLQLREKQKIRRIYGILEKQFRLYYKKASQKKGSTGENLLSLLECRLDNVVYRMGFASTRAEARQLVSHKSIMVNGLVVNIPSYQVSVNDKISIREKAKKQSRIQLALELSGQSTQPQWLDVDNKTLKGVFKNVPSRDELPSDIQEHLIVELYSK.

The region spanning 98–160 (CRLDNVVYRM…AKKQSRIQLA (63 aa)) is the S4 RNA-binding domain.

This sequence belongs to the universal ribosomal protein uS4 family. In terms of assembly, part of the 30S ribosomal subunit. Contacts protein S5. The interaction surface between S4 and S5 is involved in control of translational fidelity.

In terms of biological role, one of the primary rRNA binding proteins, it binds directly to 16S rRNA where it nucleates assembly of the body of the 30S subunit. With S5 and S12 plays an important role in translational accuracy. The chain is Small ribosomal subunit protein uS4 from Vesicomyosocius okutanii subsp. Calyptogena okutanii (strain HA).